Here is a 961-residue protein sequence, read N- to C-terminus: Integrator complex subunit 7 (961 aa).

Over residues 937-955 the composition is skewed to low complexity; sequence QVRLQQQQGQPPSQQQQQR. Residues 937 to 961 are disordered; the sequence is QVRLQQQQGQPPSQQQQQRTAYSRF.

Belongs to the Integrator subunit 7 family. As to quaternary structure, component of the Integrator complex, composed of core subunits INTS1, INTS2, INTS3, INTS4, INTS5, INTS6, INTS7, INTS8, INTS9/RC74, INTS10, INTS11/CPSF3L, INTS12, INTS13, INTS14 and INTS15. The core complex associates with protein phosphatase 2A subunits PPP2CA and PPP2R1A, to form the Integrator-PP2A (INTAC) complex.

Its subcellular location is the nucleus. The protein resides in the chromosome. The protein localises to the cytoplasm. Component of the integrator complex, a multiprotein complex that terminates RNA polymerase II (Pol II) transcription in the promoter-proximal region of genes. The integrator complex provides a quality checkpoint during transcription elongation by driving premature transcription termination of transcripts that are unfavorably configured for transcriptional elongation: the complex terminates transcription by (1) catalyzing dephosphorylation of the C-terminal domain (CTD) of Pol II subunit POLR2A/RPB1 and SUPT5H/SPT5, (2) degrading the exiting nascent RNA transcript via endonuclease activity and (3) promoting the release of Pol II from bound DNA. The integrator complex is also involved in terminating the synthesis of non-coding Pol II transcripts, such as enhancer RNAs (eRNAs), small nuclear RNAs (snRNAs), telomerase RNAs and long non-coding RNAs (lncRNAs). The polypeptide is Integrator complex subunit 7 (INTS7) (Gallus gallus (Chicken)).